Consider the following 396-residue polypeptide: Phosphopentomutase (396 aa).

Residues Asp-14, Asp-286, His-291, Asp-327, His-328, and His-339 each contribute to the Mn(2+) site.

This sequence belongs to the phosphopentomutase family. It depends on Mn(2+) as a cofactor.

Its subcellular location is the cytoplasm. The enzyme catalyses 2-deoxy-alpha-D-ribose 1-phosphate = 2-deoxy-D-ribose 5-phosphate. The catalysed reaction is alpha-D-ribose 1-phosphate = D-ribose 5-phosphate. It participates in carbohydrate degradation; 2-deoxy-D-ribose 1-phosphate degradation; D-glyceraldehyde 3-phosphate and acetaldehyde from 2-deoxy-alpha-D-ribose 1-phosphate: step 1/2. Functionally, isomerase that catalyzes the conversion of deoxy-ribose 1-phosphate (dRib-1-P) and ribose 1-phosphate (Rib-1-P) to deoxy-ribose 5-phosphate (dRib-5-P) and ribose 5-phosphate (Rib-5-P), respectively. The protein is Phosphopentomutase of Staphylococcus carnosus (strain TM300).